Reading from the N-terminus, the 316-residue chain is C1GALT1-specific chaperone 1 (316 aa).

At 1-6 the chain is on the cytoplasmic side; the sequence is MLSESS. Residues 7 to 26 traverse the membrane as a helical; Signal-anchor for type II membrane protein segment; it reads SFLKGVMLGSIFCALITMLG. Residues 27–316 are Lumenal-facing; sequence HIRIGNRMHH…FLPPNGSEND (290 aa).

The protein belongs to the glycosyltransferase 31 family. Beta3-Gal-T subfamily. As to quaternary structure, associates with core 1 beta-3-galactosyltransferase (C1GALT1), probably not with the soluble active form.

It is found in the membrane. Its function is as follows. Probable chaperone required for the generation of 1 O-glycan Gal-beta1-3GalNAc-alpha1-Ser/Thr (T antigen), which is a precursor for many extended O-glycans in glycoproteins. Probably acts as a specific molecular chaperone assisting the folding/stability of core 1 beta-3-galactosyltransferase (C1GALT1). In Rattus norvegicus (Rat), this protein is C1GALT1-specific chaperone 1 (C1galt1c1).